Here is a 311-residue protein sequence, read N- to C-terminus: Cytosolic Fe-S cluster assembly factor Nubp1 homolog (311 aa).

4 residues coordinate [4Fe-4S] cluster: Cys9, Cys23, Cys26, and Cys32. 63–70 is an ATP binding site; the sequence is GKGGVGKS. Residues Cys240 and Cys243 each contribute to the [4Fe-4S] cluster site.

This sequence belongs to the Mrp/NBP35 ATP-binding proteins family. NUBP1/NBP35 subfamily. Heterotetramer of 2 Nubp1 and 2 Nubp2 chains. Requires [4Fe-4S] cluster as cofactor.

It is found in the cytoplasm. Its function is as follows. Component of the cytosolic iron-sulfur (Fe/S) protein assembly (CIA) machinery. Required for maturation of extramitochondrial Fe-S proteins. The Nubp1-Nubp2 heterotetramer forms a Fe-S scaffold complex, mediating the de novo assembly of an Fe-S cluster and its transfer to target apoproteins. The polypeptide is Cytosolic Fe-S cluster assembly factor Nubp1 homolog (Drosophila erecta (Fruit fly)).